A 64-amino-acid chain; its full sequence is Large ribosomal subunit protein uL30 (64 aa).

This sequence belongs to the universal ribosomal protein uL30 family. In terms of assembly, part of the 50S ribosomal subunit.

This Bradyrhizobium diazoefficiens (strain JCM 10833 / BCRC 13528 / IAM 13628 / NBRC 14792 / USDA 110) protein is Large ribosomal subunit protein uL30.